Reading from the N-terminus, the 126-residue chain is Cystatin-C (126 aa).

Residues 1–18 (MKMLVFPVLAALFAVGLG) form the signal peptide. The Cystatin domain occupies 22 to 115 (GAPRDINISE…CTFSVWSRPW (94 aa)). The Secondary area of contact signature appears at 64–68 (QVVSG). 2 cysteine pairs are disulfide-bonded: Cys82–Cys92 and Cys106–Cys126.

This sequence belongs to the cystatin family. In terms of tissue distribution, ubiquitously expressed in normal tissues including brain, eye, gill, heart, gullet, liver, spleen, stomach, pyloric ceca, intestine, kidney and muscle. Expressed, but not up-regulated, in lipopolysaccharide (LPS)-stimulated tissues including kidney, spleen, muscle and gill.

It localises to the secreted. Thiol protease inhibitor. Has high papain inhibitory activity and inhibits to a lesser extent fish cathepsins L, S, K, F, X and bovine cathepsin B in vitro. In Paralichthys olivaceus (Bastard halibut), this protein is Cystatin-C.